The following is a 562-amino-acid chain: Arginine--tRNA ligase (562 aa).

The 'HIGH' region motif lies at 122-132 (PNIAKDMHVGH).

Belongs to the class-I aminoacyl-tRNA synthetase family. Monomer.

The protein localises to the cytoplasm. It carries out the reaction tRNA(Arg) + L-arginine + ATP = L-arginyl-tRNA(Arg) + AMP + diphosphate. The polypeptide is Arginine--tRNA ligase (Chlamydia felis (strain Fe/C-56) (Chlamydophila felis)).